Reading from the N-terminus, the 65-residue chain is DNA-directed RNA polymerase subunit omega (65 aa).

This sequence belongs to the RNA polymerase subunit omega family. As to quaternary structure, the RNAP catalytic core consists of 2 alpha, 1 beta, 1 beta' and 1 omega subunit. When a sigma factor is associated with the core the holoenzyme is formed, which can initiate transcription.

It carries out the reaction RNA(n) + a ribonucleoside 5'-triphosphate = RNA(n+1) + diphosphate. Functionally, promotes RNA polymerase assembly. Latches the N- and C-terminal regions of the beta' subunit thereby facilitating its interaction with the beta and alpha subunits. The chain is DNA-directed RNA polymerase subunit omega from Baumannia cicadellinicola subsp. Homalodisca coagulata.